A 580-amino-acid polypeptide reads, in one-letter code: Cytochrome c oxidase subunit 1 (580 aa).

Residues 1–25 are disordered; the sequence is MTAVAPRVDGHVAPQRPEPTGHARK. The chain crosses the membrane as a helical span at residues 43–63; that stretch reads IMYIIMSFSFFFLGGLMALLI. Residue His87 participates in Fe(II)-heme a binding. Helical transmembrane passes span 90-110, 122-142, 171-191, 214-234, 259-279, and 292-312; these read VMLLLYGTPIVWGFANYVLPL, LNAFGFWITTVGGVAMLAGFL, MWIIGVGATGIGSVASAINML, IFVTSVLALLIFPLLLAAALG, LFWFFGHPEVYVLALPFFGII, and FGYIGLVFATLSIGALSMAVW. The Cu cation site is built by His265 and Tyr269. Residues 265-269 constitute a cross-link (1'-histidyl-3'-tyrosine (His-Tyr)); sequence HPEVY. Cu cation-binding residues include His314 and His315. A run of 2 helical transmembrane segments spans residues 316–336 and 360–380; these read MFVTGAVLLPFFSFMTFLISV and MIWAVGFMSTFLFGGLTGIML. His398 contacts heme a3. The next 3 membrane-spanning stretches (helical) occupy residues 399–419, 434–454, and 477–497; these read FHYTLFGTVVFASCAGVYFWF, IHFWLTFVGFHGTFMVQHWLG, and ISTIFSFLLGLSVIPFVWNVF. His400 provides a ligand contact to Fe(II)-heme a.

The protein belongs to the heme-copper respiratory oxidase family. As to quaternary structure, associates with subunits II, III and IV to form cytochrome c oxidase. The cofactor is Cu(2+). It depends on heme as a cofactor.

Its subcellular location is the cell membrane. It carries out the reaction 4 Fe(II)-[cytochrome c] + O2 + 8 H(+)(in) = 4 Fe(III)-[cytochrome c] + 2 H2O + 4 H(+)(out). Its pathway is energy metabolism; oxidative phosphorylation. Functionally, cytochrome c oxidase is the component of the respiratory chain that catalyzes the reduction of oxygen to water. Subunits 1-3 form the functional core of the enzyme complex. CO I is the catalytic subunit of the enzyme. Electrons originating in cytochrome c are transferred via the copper A center of subunit 2 and heme A of subunit 1 to the bimetallic center formed by heme A3 and copper B. This is Cytochrome c oxidase subunit 1 (ctaD) from Corynebacterium efficiens (strain DSM 44549 / YS-314 / AJ 12310 / JCM 11189 / NBRC 100395).